Reading from the N-terminus, the 448-residue chain is NK1 transcription factor-related protein 1 (448 aa).

Over residues 1 to 13 the composition is skewed to low complexity; sequence MSASGPEAPGDIP. Disordered stretches follow at residues 1 to 80, 115 to 299, and 350 to 397; these read MSAS…LRPT, ASAP…PRRA, and KWKK…GAPL. Residues 14–30 show a composition bias toward pro residues; it reads ALPPPPQPGSGPAPPAP. 2 stretches are compositionally biased toward low complexity: residues 62–79 and 115–129; these read PAAP…PLRP and ASAP…SGRP. Residues 130-139 show a composition bias toward basic and acidic residues; the sequence is PRAEELERRA. Residues 186-203 show a composition bias toward acidic residues; the sequence is SGDEVPDDEDDDEDEAPE. Over residues 205–214 the composition is skewed to basic and acidic residues; sequence EAARGAEEAR. Gly residues-rich tracts occupy residues 215-227 and 259-270; these read GGGG…GSGC and PPGGAAAPGGAG. Over residues 271–280 the composition is skewed to low complexity; it reads TTPQGTATAA. Residues 296-355 constitute a DNA-binding region (homeobox); the sequence is PRRARTAFTYEQLVALENKFKATRYLSVCERLNLALSLSLTETQVKIWFQNRRTKWKKQN. Residues 364–382 are compositionally biased toward gly residues; sequence TGGGGGPGPGAGPGTGLPG.

The protein belongs to the NK-1 homeobox family. In terms of tissue distribution, expressed in hemopoietic progenitor cells.

The protein localises to the nucleus. May be required for the coordinated crosstalk of factors involved in the maintenance of energy homeostasis, possibly by regulating the transcription of specific factors involved in energy balance. The protein is NK1 transcription factor-related protein 1 of Homo sapiens (Human).